We begin with the raw amino-acid sequence, 87 residues long: RNA-binding protein Hfq (87 aa).

A Sm domain is found at 9-68 (DPFLNTLRRERIPVSIYLVNGIKLQGYIESFDQFVILLKNSISQMIYKHAISTVVPNHTN). A disordered region spans residues 66–87 (HTNNQEHNQSQYNNNNACISKP).

The protein belongs to the Hfq family. Homohexamer.

RNA chaperone that binds small regulatory RNA (sRNAs) and mRNAs to facilitate mRNA translational regulation in response to envelope stress, environmental stress and changes in metabolite concentrations. Also binds with high specificity to tRNAs. This Wigglesworthia glossinidia brevipalpis protein is RNA-binding protein Hfq.